A 704-amino-acid chain; its full sequence is MLKLFSAFRKDKIWDFDGGIHPPEMKTQSNGTPLRQVPLAPRFVIPLKQHIGAEGELCVSVGDRVLRGQALTRGRGRMLPVHAPTSGTVIAIAPHSTAHPSALAELSVIIDADGEDRWIEREGWSDYRAHSREALIERIHQYGVAGLGGAGFPTGVKLQGGGDKITTLIINAAECEPYITADDRLMQDCAAQIVEGIRILAHILQPREVLIGIEDNKPQAISMLRAVLADAHDISLRVIPTKYPSGGAKQLTQILTGKQVPHGGRSSDIGVLMQNVGTAYAVKRAVVDGEPITERVVTLTGEAVSRPGNVWARLGTPVRHLLNDAGFCPSADQMVIMGGPLMGFTLPWLDVPVVKITNCLLAPSVAEMGAPQEEKSCIRCSACADACPADLLPQQLYWFSKGQQHDKATAHHIADCIECGACAWVCPSNIPLVQYFRQEKAEINAIRLEEKRAAEAKARFEARQARLEREKAARLARHKSAAVQPAAKDQDAIAAALARVKEKQAQATQPVVIQAGSQPDNSAVIAAREARKAQARAKQAAHPMADSAIPGDDPSKAAVEAAIARAKARKQEQQAGSEPVEAVDPRKAAVEAAIARAKARKQEQQTGSEPAEPIDPRKAAVEAAIARAKARKQEQQTGSEPAEPIDPRKAAVEAAIARAKARKQEQQAGSEPAEPADPRKAAVAAAIARVQAKKAAQQQVVNED.

4Fe-4S ferredoxin-type domains are found at residues 368–397 (MGAP…QQLY) and 407–436 (KATA…VQYF). [4Fe-4S] cluster is bound by residues Cys377, Cys380, Cys383, Cys387, Cys416, Cys419, Cys422, and Cys426. Residues 535–684 (ARAKQAAHPM…PADPRKAAVA (150 aa)) are disordered. Low complexity predominate over residues 556–565 (KAAVEAAIAR).

The protein belongs to the 4Fe4S bacterial-type ferredoxin family. RnfC subfamily. As to quaternary structure, the complex is composed of six subunits: RsxA, RsxB, RsxC, RsxD, RsxE and RsxG. [4Fe-4S] cluster is required as a cofactor.

The protein localises to the cell inner membrane. Functionally, part of a membrane-bound complex that couples electron transfer with translocation of ions across the membrane. Required to maintain the reduced state of SoxR. The chain is Ion-translocating oxidoreductase complex subunit C from Salmonella paratyphi C (strain RKS4594).